A 554-amino-acid chain; its full sequence is Phenylalanine--tRNA ligase beta subunit (554 aa).

Residues 276–351 (LTPRYREISI…KNHGYEKFEG (76 aa)) enclose the B5 domain. 4 residues coordinate Mg(2+): aspartate 329, aspartate 335, glutamate 338, and glutamate 339.

Belongs to the phenylalanyl-tRNA synthetase beta subunit family. Type 2 subfamily. Tetramer of two alpha and two beta subunits. The cofactor is Mg(2+).

The protein localises to the cytoplasm. The enzyme catalyses tRNA(Phe) + L-phenylalanine + ATP = L-phenylalanyl-tRNA(Phe) + AMP + diphosphate + H(+). This chain is Phenylalanine--tRNA ligase beta subunit, found in Methanococcus vannielii (strain ATCC 35089 / DSM 1224 / JCM 13029 / OCM 148 / SB).